The primary structure comprises 840 residues: Mechanosensitive ion channel protein Msy2 (840 aa).

At 1-68 (MNEHRREPHR…WFNNLSFITR (68 aa)) the chain is on the cytoplasmic side. The helical transmembrane segment at 69 to 89 (WITIWFPLAGALVIPLAVGVS) threads the bilayer. At 90 to 100 (PYPNAKLGGVR) the chain is on the lumenal side. A helical transmembrane segment spans residues 101–121 (IFWIFVWLEVAWGGFWVSRVI). Residues 122-126 (ARLLP) lie on the Cytoplasmic side of the membrane. A helical membrane pass occupies residues 127-147 (YILYPLMGILPFTMYKYTVIL). The Lumenal segment spans residues 148–151 (TALE). The chain crosses the membrane as a helical span at residues 152–172 (MPLAIFFCSIVCVCTFSPIMI). The Cytoplasmic segment spans residues 173–225 (GKGNFTSTTVTTTTSATATPTASASSNAVESVFVTKTAASVPSWIKVITKILG). The helical transmembrane segment at 226–246 (AAVVTSIVLLLEKIFLHFIGF) threads the bilayer. At 247 to 449 (HYHEVQYQYR…LALGKLDRVG (203 aa)) the chain is on the lumenal side. The EF-hand domain occupies 392 to 427 (IPDDEINDIFHILDNDYSRTVTLDEMEQFTREISIE). Residues 450–491 (LGVVGIIAVLTFISFLDTSFATILAAFGTTLLSLSFVFSTSA) form a helical membrane-spanning segment. Over 492–840 (QELMSSIIFL…SQNMDGQIQY (349 aa)) the chain is Cytoplasmic. Disordered regions lie at residues 677-730 (EYSK…KRED) and 775-819 (ESNG…NTQA). Low complexity predominate over residues 688 to 700 (SDISSTASSNSLS). Residues 708–730 (SESRNYHTHDEDNSSDDNHKRED) are compositionally biased toward basic and acidic residues. A compositionally biased stretch (low complexity) spans 776–819 (SNGNANGDNTATNSQGATDNGQTTTNTTQNNVDNTQATTDNTQA).

It belongs to the MscS (TC 1.A.23) family.

It is found in the endoplasmic reticulum membrane. In terms of biological role, regulates intracellular calcium levels and cell volume for survival in response to hypo-osmotic shock. Involved in maintaining vacuole integrity and protecting the nuclear envelope upon hypo-osmotic shock. This chain is Mechanosensitive ion channel protein Msy2, found in Schizosaccharomyces pombe (strain 972 / ATCC 24843) (Fission yeast).